Consider the following 856-residue polypeptide: Inactive rhomboid protein 1 (856 aa).

Residues 1 to 21 form a disordered region; sequence MGEARRDSSSSLQHKKPPWLK. The Cytoplasmic portion of the chain corresponds to 1 to 412; sequence MGEARRDSSS…HRPFFTYWLT (412 aa). Phosphoserine is present on residues Ser-76 and Ser-176. Phosphothreonine is present on residues Thr-180 and Thr-183. Ser-391 is subject to Phosphoserine. The helical transmembrane segment at 413–433 threads the bilayer; it reads FVHSLVTILAVCIYGVAPVGF. The Lumenal portion of the chain corresponds to 434 to 656; it reads SQHETVDSVL…NPEVPDQFYR (223 aa). Asn-584 is a glycosylation site (N-linked (GlcNAc...) asparagine). Residues 657-677 form a helical membrane-spanning segment; it reads LWLSLFLHAGVLHCLVSVCFQ. The Cytoplasmic portion of the chain corresponds to 678-692; the sequence is MTVLRDLEKLAGWHR. Residues 693 to 713 traverse the membrane as a helical segment; the sequence is IAIIYLLSGVTGNLASAIFLP. At 714-715 the chain is on the lumenal side; sequence YR. Residues 716 to 736 traverse the membrane as a helical segment; it reads AEVGPAGSQFGILACLFVELF. Over 737 to 747 the chain is Cytoplasmic; that stretch reads QSWQILARPWR. A helical membrane pass occupies residues 748-768; it reads AFFKLLAVVLFLFTFGLLPWI. The Lumenal portion of the chain corresponds to 769-773; it reads DNFAH. The helical transmembrane segment at 774-794 threads the bilayer; the sequence is ISGFISGLFLSFAFLPYISFG. Over 795-804 the chain is Cytoplasmic; the sequence is KFDLYRKRCQ. A helical transmembrane segment spans residues 805-825; sequence IIVFQLVFLGLLAGLVVLFYF. Residues 826–856 are Lumenal-facing; sequence YPVRCEWCEFLTCIPFTDKFCEKYELDAQLH.

This sequence belongs to the peptidase S54 family. Homodimer, or homooligomer. Interacts with TGFA and HBEGF. Interacts with EGF; may retain EGF in the endoplasmic reticulum and regulates its degradation through the endoplasmic reticulum-associated degradation (ERAD). Interacts (via cytoplasmic N-terminus) with FRMD8/iTAP; this interaction leads to mutual protein stabilization. Interacts with ADAM17/TACE.

It is found in the endoplasmic reticulum membrane. Its subcellular location is the golgi apparatus membrane. In terms of biological role, regulates ADAM17 protease, a sheddase of the epidermal growth factor (EGF) receptor ligands and TNF, thereby plays a role in sleep, cell survival, proliferation, migration and inflammation. Does not exhibit any protease activity on its own. The polypeptide is Inactive rhomboid protein 1 (RHBDF1) (Bos taurus (Bovine)).